Reading from the N-terminus, the 121-residue chain is Small ribosomal subunit protein uS13 (121 aa).

Residues 92-121 (RKGLPCRGQRTRTNARTRKGPRKAAQSLKK) are disordered.

Belongs to the universal ribosomal protein uS13 family. As to quaternary structure, part of the 30S ribosomal subunit. Forms a loose heterodimer with protein S19. Forms two bridges to the 50S subunit in the 70S ribosome.

Located at the top of the head of the 30S subunit, it contacts several helices of the 16S rRNA. In the 70S ribosome it contacts the 23S rRNA (bridge B1a) and protein L5 of the 50S subunit (bridge B1b), connecting the 2 subunits; these bridges are implicated in subunit movement. Contacts the tRNAs in the A and P-sites. This chain is Small ribosomal subunit protein uS13, found in Janthinobacterium sp. (strain Marseille) (Minibacterium massiliensis).